Consider the following 166-residue polypeptide: Interferon gamma (166 aa).

Residues 1-23 (MSYTTYFLAFQLCVTLCFSGSYC) form the signal peptide. At glutamine 24 the chain carries Pyrrolidone carboxylic acid. 2 N-linked (GlcNAc...) asparagine glycosylation sites follow: asparagine 39 and asparagine 106.

This sequence belongs to the type II (or gamma) interferon family. Homodimer. Interacts with IFNGR1 (via extracellular domain); this interaction promotes IFNGR1 dimerization. Released primarily from activated T lymphocytes.

The protein localises to the secreted. Type II interferon produced by immune cells such as T-cells and NK cells that plays crucial roles in antimicrobial, antiviral, and antitumor responses by activating effector immune cells and enhancing antigen presentation. Primarily signals through the JAK-STAT pathway after interaction with its receptor IFNGR1 to affect gene regulation. Upon IFNG binding, IFNGR1 intracellular domain opens out to allow association of downstream signaling components JAK2, JAK1 and STAT1, leading to STAT1 activation, nuclear translocation and transcription of IFNG-regulated genes. Many of the induced genes are transcription factors such as IRF1 that are able to further drive regulation of a next wave of transcription. Plays a role in class I antigen presentation pathway by inducing a replacement of catalytic proteasome subunits with immunoproteasome subunits. In turn, increases the quantity, quality, and repertoire of peptides for class I MHC loading. Increases the efficiency of peptide generation also by inducing the expression of activator PA28 that associates with the proteasome and alters its proteolytic cleavage preference. Up-regulates as well MHC II complexes on the cell surface by promoting expression of several key molecules such as cathepsins B/CTSB, H/CTSH, and L/CTSL. Participates in the regulation of hematopoietic stem cells during development and under homeostatic conditions by affecting their development, quiescence, and differentiation. This chain is Interferon gamma (IFNG), found in Sus scrofa (Pig).